The chain runs to 157 residues: S-ribosylhomocysteine lyase (157 aa).

Fe cation-binding residues include histidine 53, histidine 57, and cysteine 124.

Belongs to the LuxS family. In terms of assembly, homodimer. The cofactor is Fe cation.

It catalyses the reaction S-(5-deoxy-D-ribos-5-yl)-L-homocysteine = (S)-4,5-dihydroxypentane-2,3-dione + L-homocysteine. Functionally, involved in the synthesis of autoinducer 2 (AI-2) which is secreted by bacteria and is used to communicate both the cell density and the metabolic potential of the environment. The regulation of gene expression in response to changes in cell density is called quorum sensing. Catalyzes the transformation of S-ribosylhomocysteine (RHC) to homocysteine (HC) and 4,5-dihydroxy-2,3-pentadione (DPD). This Borreliella afzelii (strain PKo) (Borrelia afzelii) protein is S-ribosylhomocysteine lyase.